A 133-amino-acid chain; its full sequence is MYAENYKRFLELIEKLREFEGALIVEGLRDEVALRNLGVRAEIIRLSRLPLAEIALIASRYREVMILTDFDRKGEELAKKLVSYLEGYPCRVDVETRRELKRIAKKDIKGVEELYGLYMKVVSVSDPQLEGFQ.

One can recognise a Toprim domain in the interval 20-100 (EGALIVEGLR…RVDVETRREL (81 aa)). 3 residues coordinate Mg(2+): E26, D69, and D71.

Belongs to the UPF0292 family. Requires Mg(2+) as cofactor.

This Thermococcus gammatolerans (strain DSM 15229 / JCM 11827 / EJ3) protein is UPF0292 protein TGAM_1777.